The following is a 343-amino-acid chain: Succinylglutamate desuccinylase (343 aa).

Residues His-60, Glu-63, and His-157 each coordinate Zn(2+). The active site involves Glu-221.

This sequence belongs to the AspA/AstE family. Succinylglutamate desuccinylase subfamily. The cofactor is Zn(2+).

The catalysed reaction is N-succinyl-L-glutamate + H2O = L-glutamate + succinate. Its pathway is amino-acid degradation; L-arginine degradation via AST pathway; L-glutamate and succinate from L-arginine: step 5/5. Its function is as follows. Transforms N(2)-succinylglutamate into succinate and glutamate. The polypeptide is Succinylglutamate desuccinylase (Idiomarina loihiensis (strain ATCC BAA-735 / DSM 15497 / L2-TR)).